The sequence spans 343 residues: L-rhamnose-proton symporter (343 aa).

10 consecutive transmembrane segments (helical) span residues 4 to 24 (AIIL…CFYA), 38 to 58 (WSIG…YLLL), 68 to 88 (FSIA…IGNI), 101 to 121 (MGIG…TPIL), 137 to 157 (TLLG…AGLL), 175 to 195 (LILA…MDAA), 207 to 227 (INSL…GAII), 254 to 274 (LLIT…LQFF), 289 to 309 (MSWM…GLLL), and 320 to 340 (VAVL…VGLG).

Belongs to the L-rhamnose transporter (TC 2.A.7.6) family.

Its subcellular location is the cell inner membrane. It catalyses the reaction L-rhamnopyranose(in) + H(+)(in) = L-rhamnopyranose(out) + H(+)(out). Uptake of L-rhamnose across the cytoplasmic membrane with the concomitant transport of protons into the cell (symport system). In Yersinia pestis bv. Antiqua (strain Antiqua), this protein is L-rhamnose-proton symporter.